The sequence spans 706 residues: Elongation factor G (706 aa).

The tr-type G domain maps to 8–295 (ELYRNFGIMA…AVIDYLPSPL (288 aa)). GTP-binding positions include 17 to 24 (AHIDAGKT), 92 to 96 (DTPGH), and 146 to 149 (NKMD).

The protein belongs to the TRAFAC class translation factor GTPase superfamily. Classic translation factor GTPase family. EF-G/EF-2 subfamily.

It is found in the cytoplasm. Catalyzes the GTP-dependent ribosomal translocation step during translation elongation. During this step, the ribosome changes from the pre-translocational (PRE) to the post-translocational (POST) state as the newly formed A-site-bound peptidyl-tRNA and P-site-bound deacylated tRNA move to the P and E sites, respectively. Catalyzes the coordinated movement of the two tRNA molecules, the mRNA and conformational changes in the ribosome. The polypeptide is Elongation factor G (Ruegeria sp. (strain TM1040) (Silicibacter sp.)).